Here is a 1016-residue protein sequence, read N- to C-terminus: Calmodulin-binding transcription activator 4 (1016 aa).

The segment at residues 38 to 164 (ISTLYQEAHS…YRDVSEREEG (127 aa)) is a DNA-binding region (CG-1). The disordered stretch occupies residues 324 to 343 (KNGSGPSGGTGGSGDQGSES). The segment covering 328–338 (GPSGGTGGSGD) has biased composition (gly residues). 3 ANK repeats span residues 647 to 676 (QEQG…NVDF), 680 to 709 (KGWS…SAGA), and 719 to 748 (NGKT…TNHL). A disordered region spans residues 753–786 (LEETENSKDTAQVQTEKTLNSISEQSPSGNEDQV). The segment covering 761–785 (DTAQVQTEKTLNSISEQSPSGNEDQ) has biased composition (polar residues). IQ domains are found at residues 798 to 827 (AAQA…LVAC), 855 to 884 (YNSA…KVVK), and 878 to 907 (LRQK…AVRI). Positions 903 to 925 (WAVRILDKVVLRWRRKGVGLRGF) are calmodulin-binding. Residues S935 and S962 each carry the phosphoserine modification.

Belongs to the CAMTA family. As to expression, expressed in roots, stems, leaves, flowers and siliques.

The protein resides in the nucleus. Functionally, transcription activator that binds to the DNA consensus sequence 5'-[ACG]CGCG[GTC]-3'. Regulates transcriptional activity in response to calcium signals. Binds calmodulin in a calcium-dependent manner. Involved together with CAMTA2 and CAMTA3 in the positive regulation of a general stress response. The protein is Calmodulin-binding transcription activator 4 of Arabidopsis thaliana (Mouse-ear cress).